The following is a 196-amino-acid chain: Large ribosomal subunit protein bL9 (196 aa).

This sequence belongs to the bacterial ribosomal protein bL9 family.

Its function is as follows. Binds to the 23S rRNA. This is Large ribosomal subunit protein bL9 from Rhodopseudomonas palustris (strain HaA2).